Here is a 1551-residue protein sequence, read N- to C-terminus: Serine/threonine-protein kinase MRCK gamma (1551 aa).

One can recognise a Protein kinase domain in the interval 71–337 (FEILKVIGRG…LDDFRNHPFF (267 aa)). ATP is bound by residues 77 to 85 (IGRGAFGEV) and Lys100. Asp195 acts as the Proton acceptor in catalysis. Residues Ser216 and Ser228 each carry the phosphoserine; by autocatalysis modification. Thr234 carries the post-translational modification Phosphothreonine; by autocatalysis. The AGC-kinase C-terminal domain occupies 338-408 (EGVDWERLAS…TSGSHSPESS (71 aa)). Coiled coils occupy residues 406-678 (ESSS…SNWE) and 730-802 (KARR…RARG). 4 disordered regions span residues 467–486 (KASL…QDSD), 655–675 (ELAQ…ETES), 801–849 (RGPV…PEGR), and 863–886 (TANT…PRSF). Residues 655-674 (ELAQEQESKQRLEGERRETE) show a composition bias toward basic and acidic residues. Basic and acidic residues predominate over residues 835–849 (ATRHGGEPDLRPEGR). A Phorbol-ester/DAG-type zinc finger spans residues 878 to 927 (SHTLRPRSFPSPTKCLRCTSLMLGLGRQGLGCDACGYFCHTTCAPQAPPC). The PH domain occupies 947–1066 (GTAYEGFLSV…WLQVLGELQR (120 aa)). One can recognise a CNH domain in the interval 1092-1366 (LPHTLCAAIL…RPLNPEGSLF (275 aa)). The region spanning 1437–1450 (ISPPTNFNHLVHVG) is the CRIB domain. The disordered stretch occupies residues 1442–1551 (NFNHLVHVGP…PLSPELESSP (110 aa)). Residues 1457–1470 (GARDKSPAPEEKGR) are compositionally biased toward basic and acidic residues. The residue at position 1482 (Ser1482) is a Phosphoserine. Residues 1511-1533 (TSLSSESVSCPQGSLSPATSLMQ) are compositionally biased toward polar residues. The segment covering 1540-1551 (SLPLSPELESSP) has biased composition (low complexity).

Belongs to the protein kinase superfamily. AGC Ser/Thr protein kinase family. DMPK subfamily. As to quaternary structure, homodimer and homotetramer via the coiled coil regions. Interacts tightly with GTP-bound but not GDP-bound CDC42. Requires Mg(2+) as cofactor. In terms of tissue distribution, expressed in heart and skeletal muscle.

It is found in the cytoplasm. The enzyme catalyses L-seryl-[protein] + ATP = O-phospho-L-seryl-[protein] + ADP + H(+). It catalyses the reaction L-threonyl-[protein] + ATP = O-phospho-L-threonyl-[protein] + ADP + H(+). Its activity is regulated as follows. Maintained in an inactive, closed conformation by an interaction between the kinase domain and the negative autoregulatory C-terminal coiled-coil region. Agonist binding to the phorbol ester binding site disrupts this, releasing the kinase domain to allow N-terminus-mediated dimerization and kinase activation by transautophosphorylation. Its function is as follows. May act as a downstream effector of CDC42 in cytoskeletal reorganization. Contributes to the actomyosin contractility required for cell invasion, through the regulation of MYPT1 and thus MLC2 phosphorylation. This chain is Serine/threonine-protein kinase MRCK gamma, found in Homo sapiens (Human).